The primary structure comprises 224 residues: Mammalian ependymin-related protein 1 (224 aa).

The first 37 residues, 1–37 (MPARAPRRLVQGPRGTWLLGSLWVWVLCGLGMAGSLG), serve as a signal peptide directing secretion. 3 cysteine pairs are disulfide-bonded: C42-C172, C88-C222, and C113-C210. 2 N-linked (GlcNAc...) asparagine glycosylation sites follow: N130 and N182.

This sequence belongs to the ependymin family. As to quaternary structure, homodimer. N-glycosylated; the glycan contains mannose-6-phosphate moieties. Detected in brain, small intestine and in soleus, extensor digitorum longus and white gastrocnemius (at protein level). Detected in brain and skeletal muscle, and at lower leavels in heart.

It is found in the lysosome lumen. The protein localises to the secreted. Its function is as follows. Binds anionic lipids and gangliosides at acidic pH. This Mus musculus (Mouse) protein is Mammalian ependymin-related protein 1 (Epdr1).